Consider the following 120-residue polypeptide: MSLTNEQIIEAIASKSVSEIVELITAMEEKFGVSAAAAVAAAPAAAAAEEKTEFDVVLANAGANKVAVIKAVRGATGLGLKEAKDLVESAPATLKEGISKPEAEALKKELEDAGAQVEIK.

The protein belongs to the bacterial ribosomal protein bL12 family. Homodimer. Part of the ribosomal stalk of the 50S ribosomal subunit. Forms a multimeric L10(L12)X complex, where L10 forms an elongated spine to which 2 to 4 L12 dimers bind in a sequential fashion. Binds GTP-bound translation factors.

Its function is as follows. Forms part of the ribosomal stalk which helps the ribosome interact with GTP-bound translation factors. Is thus essential for accurate translation. In Haemophilus ducreyi (strain 35000HP / ATCC 700724), this protein is Large ribosomal subunit protein bL12.